Here is a 432-residue protein sequence, read N- to C-terminus: Methylenetetrahydrofolate--tRNA-(uracil-5-)-methyltransferase TrmFO (432 aa).

Residue 7–12 coordinates FAD; that stretch reads GGGLAG.

The protein belongs to the MnmG family. TrmFO subfamily. The cofactor is FAD.

The protein resides in the cytoplasm. It catalyses the reaction uridine(54) in tRNA + (6R)-5,10-methylene-5,6,7,8-tetrahydrofolate + NADH + H(+) = 5-methyluridine(54) in tRNA + (6S)-5,6,7,8-tetrahydrofolate + NAD(+). The catalysed reaction is uridine(54) in tRNA + (6R)-5,10-methylene-5,6,7,8-tetrahydrofolate + NADPH + H(+) = 5-methyluridine(54) in tRNA + (6S)-5,6,7,8-tetrahydrofolate + NADP(+). Functionally, catalyzes the folate-dependent formation of 5-methyl-uridine at position 54 (M-5-U54) in all tRNAs. The sequence is that of Methylenetetrahydrofolate--tRNA-(uracil-5-)-methyltransferase TrmFO from Coprothermobacter proteolyticus (strain ATCC 35245 / DSM 5265 / OCM 4 / BT).